Here is a 250-residue protein sequence, read N- to C-terminus: MNIEEILPELFGEKRVYYCQRCLNHGLREKRKNHKLSCTFRFCQCSNCIMVERRRQLNSRLMQIDGSRDEKPMTTLTMALTCSEEDQMECTSQSETTNESSGEDKDDGKPKERRPNCQRCAQHSVVNRLKGHKRACPFRDCFCAKCQVVVERQKLMADQIKLRRRQKREKNNLNSEREAPIAHSMTPSPIDTVTTTTTPTSETSTPMCLKCAQQVIGYQQLLSLLDPSATLQDPMITLSAVLSACPHKNE.

Residues 19 to 68 (CQRCLNHGLREKRKNHKLSCTFRFCQCSNCIMVERRRQLNSRLMQIDGSR) constitute a DNA-binding region (DM 1). The segment covering 90-100 (CTSQSETTNES) has biased composition (polar residues). The tract at residues 90–115 (CTSQSETTNESSGEDKDDGKPKERRP) is disordered. Over residues 102-115 (GEDKDDGKPKERRP) the composition is skewed to basic and acidic residues. The DM 2 DNA-binding region spans 117-164 (CQRCAQHSVVNRLKGHKRACPFRDCFCAKCQVVVERQKLMADQIKLRR). The disordered stretch occupies residues 166 to 201 (QKREKNNLNSEREAPIAHSMTPSPIDTVTTTTTPTS). Positions 169–180 (EKNNLNSEREAP) are enriched in basic and acidic residues. Positions 186 to 201 (TPSPIDTVTTTTTPTS) are enriched in low complexity.

The protein belongs to the DMRT family. As to expression, in males, expressed in the tail tip. Specifically, expressed in 15 male-specific muscles of the tail tip called the diagonal muscles, and also in core body muscles of both males and hermaphrodites. In males, expressed in ray A-neurons. In males, expressed in PHC sensory neurons. In males, it is also expressed in the hindgut, B lineage and somatic gonad. In hermaphrodites, expressed in the anchor cell only.

The protein localises to the nucleus. Its subcellular location is the perikaryon. Its function is as follows. Transcriptional activator which promotes male-specific development. Acts partially redundantly with the transcription factor mab-3 to coordinate tail tip cell fusion and retraction and thereby regulate male tail tip morphogenesis. This is most likely through the regulation of downstream effectors such as eff-1. May also negatively regulate the expression of other proteins implicated in male tail morphogenesis including nhr-25, vav-1 and arl-1 in tail tip cells. In males, plays a role in the development of ray A-neurons by negatively regulating the activity of the transcription factor ast-1. Plays a role in the male-specific differentiation of PHC sensory neurons into densely connected hub sensory neurons. Plays a role in male mating behavior. The protein is Doublesex- and mab-3-related transcription factor dmd-3 of Caenorhabditis elegans.